A 339-amino-acid chain; its full sequence is D-erythrose-4-phosphate dehydrogenase (339 aa).

12–13 lines the NAD(+) pocket; sequence RI. Residues 154-156, arginine 200, 213-214, and arginine 236 contribute to the substrate site; these read SCT and TK. Residue cysteine 155 is the Nucleophile of the active site. Asparagine 318 is a binding site for NAD(+).

Belongs to the glyceraldehyde-3-phosphate dehydrogenase family. Epd subfamily. In terms of assembly, homotetramer.

The protein localises to the cytoplasm. It catalyses the reaction D-erythrose 4-phosphate + NAD(+) + H2O = 4-phospho-D-erythronate + NADH + 2 H(+). The protein operates within cofactor biosynthesis; pyridoxine 5'-phosphate biosynthesis; pyridoxine 5'-phosphate from D-erythrose 4-phosphate: step 1/5. Catalyzes the NAD-dependent conversion of D-erythrose 4-phosphate to 4-phosphoerythronate. The protein is D-erythrose-4-phosphate dehydrogenase of Enterobacter sp. (strain 638).